We begin with the raw amino-acid sequence, 85 residues long: Large ribosomal subunit protein bL27 (85 aa).

The tract at residues Met-1–Leu-21 is disordered.

It belongs to the bacterial ribosomal protein bL27 family.

The polypeptide is Large ribosomal subunit protein bL27 (Chlorobium chlorochromatii (strain CaD3)).